Here is a 229-residue protein sequence, read N- to C-terminus: Carbonic anhydrase 2 (229 aa).

C42, D44, H98, and C101 together coordinate Zn(2+).

This sequence belongs to the beta-class carbonic anhydrase family. The cofactor is Zn(2+).

The enzyme catalyses hydrogencarbonate + H(+) = CO2 + H2O. This is Carbonic anhydrase 2 (can) from Haemophilus influenzae (strain ATCC 51907 / DSM 11121 / KW20 / Rd).